A 646-amino-acid chain; its full sequence is Phosphomethylpyrimidine synthase (646 aa).

Positions 1–13 are enriched in polar residues; it reads MNIRSNPDTTRPA. Residues 1 to 30 are disordered; it reads MNIRSNPDTTRPAVTTGALPSSRKMFSAPD. Residues Asn221, Met250, Tyr279, His315, 335–337, 376–379, and Glu415 each bind substrate; these read SRG and DGLR. His419 provides a ligand contact to Zn(2+). Tyr442 contacts substrate. Zn(2+) is bound at residue His483. 3 residues coordinate [4Fe-4S] cluster: Cys563, Cys566, and Cys571.

The protein belongs to the ThiC family. As to quaternary structure, homodimer. It depends on [4Fe-4S] cluster as a cofactor.

It catalyses the reaction 5-amino-1-(5-phospho-beta-D-ribosyl)imidazole + S-adenosyl-L-methionine = 4-amino-2-methyl-5-(phosphooxymethyl)pyrimidine + CO + 5'-deoxyadenosine + formate + L-methionine + 3 H(+). Its pathway is cofactor biosynthesis; thiamine diphosphate biosynthesis. Its function is as follows. Catalyzes the synthesis of the hydroxymethylpyrimidine phosphate (HMP-P) moiety of thiamine from aminoimidazole ribotide (AIR) in a radical S-adenosyl-L-methionine (SAM)-dependent reaction. This Nitrobacter winogradskyi (strain ATCC 25391 / DSM 10237 / CIP 104748 / NCIMB 11846 / Nb-255) protein is Phosphomethylpyrimidine synthase.